A 348-amino-acid chain; its full sequence is tRNA N6-adenosine threonylcarbamoyltransferase (348 aa).

Fe cation contacts are provided by H115 and H119. Substrate-binding positions include 137 to 141 (LASGG), D170, G183, and N281. D309 serves as a coordination point for Fe cation.

It belongs to the KAE1 / TsaD family. The cofactor is Fe(2+).

It localises to the cytoplasm. The catalysed reaction is L-threonylcarbamoyladenylate + adenosine(37) in tRNA = N(6)-L-threonylcarbamoyladenosine(37) in tRNA + AMP + H(+). Functionally, required for the formation of a threonylcarbamoyl group on adenosine at position 37 (t(6)A37) in tRNAs that read codons beginning with adenine. Is involved in the transfer of the threonylcarbamoyl moiety of threonylcarbamoyl-AMP (TC-AMP) to the N6 group of A37, together with TsaE and TsaB. TsaD likely plays a direct catalytic role in this reaction. The chain is tRNA N6-adenosine threonylcarbamoyltransferase from Methylobacterium sp. (strain 4-46).